The primary structure comprises 56 residues: Large ribosomal subunit protein bL32 (56 aa).

Residues 1–29 form a disordered region; it reads MAVQQNKPSRSKRGMRRSHDALTTSSVSV.

It belongs to the bacterial ribosomal protein bL32 family.

The sequence is that of Large ribosomal subunit protein bL32 from Pectobacterium atrosepticum (strain SCRI 1043 / ATCC BAA-672) (Erwinia carotovora subsp. atroseptica).